The chain runs to 164 residues: Mediator of RNA polymerase II transcription subunit 21 (164 aa).

Residues 49–81 (APLPANQTQQGSTLGSNRQTVSPSTQAEAESNF) form a disordered region. The span at 53–81 (ANQTQQGSTLGSNRQTVSPSTQAEAESNF) shows a compositional bias: polar residues. Positions 114–146 (ESQLKIIDDLSKELQSVEQEQVKKIQEKDKLLK) form a coiled coil.

It belongs to the Mediator complex subunit 21 family. In terms of assembly, component of the Mediator complex.

Its subcellular location is the nucleus. In terms of biological role, component of the Mediator complex, a coactivator involved in the regulated transcription of nearly all RNA polymerase II-dependent genes. Mediator functions as a bridge to convey information from gene-specific regulatory proteins to the basal RNA polymerase II transcription machinery. Mediator is recruited to promoters by direct interactions with regulatory proteins and serves as a scaffold for the assembly of a functional preinitiation complex with RNA polymerase II and the general transcription factors. The protein is Mediator of RNA polymerase II transcription subunit 21 (SRB7) of Scheffersomyces stipitis (strain ATCC 58785 / CBS 6054 / NBRC 10063 / NRRL Y-11545) (Yeast).